A 1803-amino-acid polypeptide reads, in one-letter code: Transposon Ty4-J Gag-Pol polyprotein (1803 aa).

Positions 39 to 115 (RKVSIKDEQV…IQLLETNENN (77 aa)) form a coiled coil. The ty4 protease stretch occupies residues 382–502 (NNHLSPVQNE…KTKMVLSRKY (121 aa)). D415 serves as the catalytic For protease activity; shared with dimeric partner. The segment at 540-600 (AIKPTSSPGF…EPNEFWCQTC (61 aa)) is integrase-type zinc finger-like. The Integrase catalytic domain maps to 620-787 (TDHEPGSSWC…LPLKAISRQP (168 aa)). 2 residues coordinate Mg(2+): D631 and D696. The disordered stretch occupies residues 1224 to 1250 (KRKRKRHDKNNSLTSYELERDKKRSKK). The 136-residue stretch at 1376-1511 (RNMFMKTLDI…DILGMDLVYN (136 aa)) folds into the Reverse transcriptase Ty1/copia-type domain. Mg(2+) contacts are provided by D1384, D1463, D1464, D1645, E1687, and D1721. The region spanning 1645–1791 (DASVGSEYDA…KRFIQVLKNK (147 aa)) is the RNase H Ty1/copia-type domain.

As to quaternary structure, the protease is a homodimer, whose active site consists of two apposed aspartic acid residues. In terms of processing, proteolytically processed into capsid protein (CA), Ty4 protease (PR), integrase (IN) and reverse transcriptase/ribonuclease H (RT) proteins. Initially, virus-like particles (VLPs) are composed of the structural unprocessed proteins Gag and Gag-Pol, and also contain the host initiator methionine tRNA (tRNA(i)-Met) which serves as a primer for minus-strand DNA synthesis, and a dimer of genomic Ty RNA. Processing of the polyproteins occurs within the particle and proceeds by an ordered pathway, called maturation. First, the protease (PR) is released by autocatalytic cleavage of the Gag-Pol polyprotein, and this cleavage is a prerequisite for subsequent processing at the remaining sites to release the mature structural and catalytic proteins. Maturation takes place prior to the RT reaction and is required to produce transposition-competent VLPs.

It localises to the cytoplasm. Its subcellular location is the nucleus. It carries out the reaction DNA(n) + a 2'-deoxyribonucleoside 5'-triphosphate = DNA(n+1) + diphosphate. The catalysed reaction is Endonucleolytic cleavage to 5'-phosphomonoester.. Its function is as follows. Capsid protein (CA) is the structural component of the virus-like particle (VLP), forming the shell that encapsulates the retrotransposons dimeric RNA genome. In terms of biological role, the aspartyl protease (PR) mediates the proteolytic cleavages of the Gag and Gag-Pol polyproteins after assembly of the VLP. Reverse transcriptase/ribonuclease H (RT) is a multifunctional enzyme that catalyzes the conversion of the retro-elements RNA genome into dsDNA within the VLP. The enzyme displays a DNA polymerase activity that can copy either DNA or RNA templates, and a ribonuclease H (RNase H) activity that cleaves the RNA strand of RNA-DNA heteroduplexes during plus-strand synthesis and hydrolyzes RNA primers. The conversion leads to a linear dsDNA copy of the retrotransposon that includes long terminal repeats (LTRs) at both ends. Functionally, integrase (IN) targets the VLP to the nucleus, where a subparticle preintegration complex (PIC) containing at least integrase and the newly synthesized dsDNA copy of the retrotransposon must transit the nuclear membrane. Once in the nucleus, integrase performs the integration of the dsDNA into the host genome. The protein is Transposon Ty4-J Gag-Pol polyprotein (TY4B-J) of Saccharomyces cerevisiae (strain ATCC 204508 / S288c) (Baker's yeast).